The following is a 163-amino-acid chain: Nucleotide-binding protein YPDSF_2805 (163 aa).

Belongs to the YajQ family.

Functionally, nucleotide-binding protein. This chain is Nucleotide-binding protein YPDSF_2805, found in Yersinia pestis (strain Pestoides F).